The primary structure comprises 612 residues: UvrABC system protein C (612 aa).

Residues 15-93 enclose the GIY-YIG domain; sequence HLPGVYRMYD…IKQHQPKYNV (79 aa). In terms of domain architecture, UVR spans 203–238; the sequence is SQVIDYLMQKMEIAASELDFETAARFRDQIQSVRAV.

Belongs to the UvrC family. Interacts with UvrB in an incision complex.

It localises to the cytoplasm. Functionally, the UvrABC repair system catalyzes the recognition and processing of DNA lesions. UvrC both incises the 5' and 3' sides of the lesion. The N-terminal half is responsible for the 3' incision and the C-terminal half is responsible for the 5' incision. The protein is UvrABC system protein C of Haemophilus ducreyi (strain 35000HP / ATCC 700724).